The chain runs to 378 residues: Succinyl-diaminopimelate desuccinylase 2 (378 aa).

Residue His68 participates in Zn(2+) binding. The active site involves Asp70. Asp101 is a binding site for Zn(2+). Residue Glu135 is the Proton acceptor of the active site. Zn(2+) is bound by residues Glu136, Glu164, and His350.

The protein belongs to the peptidase M20A family. DapE subfamily. Homodimer. Zn(2+) serves as cofactor. Co(2+) is required as a cofactor.

It carries out the reaction N-succinyl-(2S,6S)-2,6-diaminopimelate + H2O = (2S,6S)-2,6-diaminopimelate + succinate. It participates in amino-acid biosynthesis; L-lysine biosynthesis via DAP pathway; LL-2,6-diaminopimelate from (S)-tetrahydrodipicolinate (succinylase route): step 3/3. Functionally, catalyzes the hydrolysis of N-succinyl-L,L-diaminopimelic acid (SDAP), forming succinate and LL-2,6-diaminopimelate (DAP), an intermediate involved in the bacterial biosynthesis of lysine and meso-diaminopimelic acid, an essential component of bacterial cell walls. This is Succinyl-diaminopimelate desuccinylase 2 from Alteromonas mediterranea (strain DSM 17117 / CIP 110805 / LMG 28347 / Deep ecotype).